The chain runs to 763 residues: Phosphoglycerol transferase I (763 aa).

4 helical membrane passes run 1–21, 26–46, 77–97, and 108–128; these read MSELLSVALFLASVLIYAWKA, WWFAATLTVLGLFVILNITLY, ILPGIGIALALVAVFGALGWV, and VGYSLLALLLALGSVDASPAF.

The protein belongs to the OpgB family.

The protein localises to the cell inner membrane. The enzyme catalyses a phosphatidylglycerol + a membrane-derived-oligosaccharide D-glucose = a 1,2-diacyl-sn-glycerol + a membrane-derived-oligosaccharide 6-(glycerophospho)-D-glucose.. It participates in glycan metabolism; osmoregulated periplasmic glucan (OPG) biosynthesis. Transfers a phosphoglycerol residue from phosphatidylglycerol to the membrane-bound nascent glucan backbones. The sequence is that of Phosphoglycerol transferase I from Salmonella choleraesuis (strain SC-B67).